Consider the following 155-residue polypeptide: HTH-type transcriptional repressor MdtR (155 aa).

In terms of domain architecture, HTH marR-type spans 4 to 140; the sequence is ADQLMSDIQL…AAHITAKLAQ (137 aa). The H-T-H motif DNA-binding region spans 54 to 77; that stretch reads VSEIAERMEVKPSAVTLMADRLEQ.

In terms of assembly, homodimer.

It is found in the cytoplasm. The binding of MdtR to the mdtRP promoter region is severely inhibited by adding excess concentrations of fusidic acid or novobiocin but not by actinomycin or streptomycin. In terms of biological role, repressor of the multidrug resistance operon mdtRP. Acts by binding directly to the mdtRP promoter region, leading to the repression of its expression. This is HTH-type transcriptional repressor MdtR from Bacillus subtilis (strain 168).